Consider the following 122-residue polypeptide: Large ribosomal subunit protein uL14 (122 aa).

This sequence belongs to the universal ribosomal protein uL14 family. As to quaternary structure, part of the 50S ribosomal subunit. Forms a cluster with proteins L3 and L19. In the 70S ribosome, L14 and L19 interact and together make contacts with the 16S rRNA in bridges B5 and B8.

In terms of biological role, binds to 23S rRNA. Forms part of two intersubunit bridges in the 70S ribosome. The sequence is that of Large ribosomal subunit protein uL14 from Acinetobacter baumannii (strain AB307-0294).